A 135-amino-acid chain; its full sequence is Histone H3 type 1 (135 aa).

A disordered region spans residues 1 to 40 (MARTKQTARKSTGGKAPRKQLATKAARKTPATGGVKKPHR). Position 5 is an N6-methyllysine (Lys-5). Lys-10 is modified (N6-acetyllysine; alternate). Lys-10 carries the post-translational modification N6-methyllysine; alternate. Ser-11 bears the Phosphoserine mark. At Thr-12 the chain carries Phosphothreonine. N6-acetyllysine is present on residues Lys-15, Lys-19, and Lys-24. The residue at position 28 (Lys-28) is an N6-acetyllysine; alternate. Position 28 is an N6-methyllysine; alternate (Lys-28). Lys-36 and Lys-37 each carry N6-methyllysine.

Belongs to the histone H3 family. The nucleosome is a histone octamer containing two molecules each of H2A, H2B, H3 and H4 assembled in one H3-H4 heterotetramer and two H2A-H2B heterodimers. The octamer wraps approximately 147 bp of DNA. Acetylation is generally linked to gene activation. Acetylated to form H3K9ac (11%), H3K14ac (17%), H3K18ac (11%), H3K23ac (16%) and H3K27ac (7%). H3K4, H3K35 and H3K36 are not acetylated. H3K4me prevents acetylation. 32% of the histone H3 are acetylated with, on average, 2.4 acetyl-Lys. They are all continuously deacatylated and re-acetylated with a half-life of approximately 2 minutes. Post-translationally, monomethylated to form H3K4me1 (81%), H3K9me1 (16%), H3K27me1 (25%), H3K35me1 (25%) and H3K36me1 (5%). No methylation at H3K14, H3K18 and H3K23. Methylated by a protein complex that includes Mut11. Set1 methylates specifically H3K4. H3K4me1 is associated with silenced euchromatin. Set3 forms H3K9me1, while H3K9me2 is undetected. H3K9me1 is specifically associated with silent, multi-copy transgenes. In terms of processing, no phosphorylation detected.

It localises to the nucleus. It is found in the chromosome. In terms of biological role, core component of nucleosome. Nucleosomes wrap and compact DNA into chromatin, limiting DNA accessibility to the cellular machineries which require DNA as a template. Histones thereby play a central role in transcription regulation, DNA repair, DNA replication and chromosomal stability. DNA accessibility is regulated via a complex set of post-translational modifications of histones, also called histone code, and nucleosome remodeling. This is Histone H3 type 1 (ch3-I) from Chlamydomonas reinhardtii (Chlamydomonas smithii).